The chain runs to 466 residues: MTAKKTWSDRFEGSLHPTIVEFNASIGFDIELIEYDLTGSIAHAKMLAYTGIISPEEADSLVSGLEQIRQEYRTGNFNPGIDQEDVHFAVERRLTEIVGDVGKKLHTARSRNDQVGTDIRLYLRQQIDDIRQEIRNFQQALVNHAENHLETLIPGYTHLQRAQPISLAHHLLAYFQMAERDHQRLGQIRARTNISPLGCGALAGTTFPIDRHYSANLLDFEQVYNNSLDGVSDRDFAIEFMTAASLIMVHLSRLSEEMILWASQEFSFITLTDSCATGSSIMPQKKNPDVPELVRGKTGRVFGHLQALLTLMKGLPLAYNKDLQEDKEALFDGVKTVRICLQAMTVLLATGIQFKTDRLANAVAEDFSNATDVADYLASKGIPFREAYNLVGKVVKSSLAAGKLLKDLTLTEWQELHPAFEADIYDAIAPRQVVAARNSYGGTGFEEVRSALIQAKAILDHRKFWV.

This sequence belongs to the lyase 1 family. Argininosuccinate lyase subfamily.

It is found in the cytoplasm. It carries out the reaction 2-(N(omega)-L-arginino)succinate = fumarate + L-arginine. Its pathway is amino-acid biosynthesis; L-arginine biosynthesis; L-arginine from L-ornithine and carbamoyl phosphate: step 3/3. The protein is Argininosuccinate lyase of Microcystis aeruginosa (strain NIES-843 / IAM M-2473).